Here is a 459-residue protein sequence, read N- to C-terminus: Phosphomethylpyrimidine synthase (459 aa).

Substrate is bound by residues asparagine 80, methionine 109, tyrosine 139, histidine 175, 195-197 (SRG), 236-239 (DSLR), and glutamate 275. Zn(2+) is bound at residue histidine 279. Position 302 (tyrosine 302) interacts with substrate. Histidine 343 is a binding site for Zn(2+). Residues cysteine 423, cysteine 426, and cysteine 431 each contribute to the [4Fe-4S] cluster site.

Belongs to the ThiC family. [4Fe-4S] cluster is required as a cofactor.

It carries out the reaction 5-amino-1-(5-phospho-beta-D-ribosyl)imidazole + S-adenosyl-L-methionine = 4-amino-2-methyl-5-(phosphooxymethyl)pyrimidine + CO + 5'-deoxyadenosine + formate + L-methionine + 3 H(+). It participates in cofactor biosynthesis; thiamine diphosphate biosynthesis. Catalyzes the synthesis of the hydroxymethylpyrimidine phosphate (HMP-P) moiety of thiamine from aminoimidazole ribotide (AIR) in a radical S-adenosyl-L-methionine (SAM)-dependent reaction. The protein is Phosphomethylpyrimidine synthase of Prochlorococcus marinus (strain MIT 9303).